The following is a 663-amino-acid chain: 4-hydroxy-3-methylbut-2-en-1-yl diphosphate synthase (flavodoxin) (663 aa).

The [4Fe-4S] cluster site is built by C568, C571, C602, and E609.

This sequence belongs to the IspG family. [4Fe-4S] cluster is required as a cofactor.

It catalyses the reaction (2E)-4-hydroxy-3-methylbut-2-enyl diphosphate + oxidized [flavodoxin] + H2O + 2 H(+) = 2-C-methyl-D-erythritol 2,4-cyclic diphosphate + reduced [flavodoxin]. It participates in isoprenoid biosynthesis; isopentenyl diphosphate biosynthesis via DXP pathway; isopentenyl diphosphate from 1-deoxy-D-xylulose 5-phosphate: step 5/6. Its function is as follows. Converts 2C-methyl-D-erythritol 2,4-cyclodiphosphate (ME-2,4cPP) into 1-hydroxy-2-methyl-2-(E)-butenyl 4-diphosphate. The protein is 4-hydroxy-3-methylbut-2-en-1-yl diphosphate synthase (flavodoxin) of Leptospira interrogans serogroup Icterohaemorrhagiae serovar copenhageni (strain Fiocruz L1-130).